The primary structure comprises 267 residues: MTKFVGCIDLHDGQVKQIVGGTLTDSSKDKVTTNFVSKLPPSHYAKLYHENQVEGCHVIKLGPNNDEAALEALNECPNFLQVGGGITLDNCGYWLKYASKIIVTSFLFDKSTYQFQREKLVKLAEICGKDRLVVDLSCKRVTKPDQEPKWVVAMNKWQTLTDLELNERTFADLCQYTDEFLVHAADVEGLCNGIDEELVAHLYKWTADIPKVKIVYAGGAKSVDDLRLVEKLSHGKIDLTFGSALDIFGGSLVKFEDCVQWNHEKHA.

Belongs to the HisA/HisF family.

The protein resides in the cytoplasm. The catalysed reaction is 1-(5-phospho-beta-D-ribosyl)-5-[(5-phospho-beta-D-ribosylamino)methylideneamino]imidazole-4-carboxamide = 5-[(5-phospho-1-deoxy-D-ribulos-1-ylimino)methylamino]-1-(5-phospho-beta-D-ribosyl)imidazole-4-carboxamide. It participates in amino-acid biosynthesis; L-histidine biosynthesis; L-histidine from 5-phospho-alpha-D-ribose 1-diphosphate: step 4/9. This Kluyveromyces lactis (strain ATCC 8585 / CBS 2359 / DSM 70799 / NBRC 1267 / NRRL Y-1140 / WM37) (Yeast) protein is 1-(5-phosphoribosyl)-5-[(5-phosphoribosylamino)methylideneamino] imidazole-4-carboxamide isomerase (HIS6).